A 499-amino-acid chain; its full sequence is Phenylalanine--tRNA ligase alpha subunit (499 aa).

L-phenylalanine is bound by residues T342, 381 to 383, and F422; that span reads QID. E424 provides a ligand contact to Mg(2+). Residue F447 participates in L-phenylalanine binding.

This sequence belongs to the class-II aminoacyl-tRNA synthetase family. Phe-tRNA synthetase alpha subunit type 2 subfamily. In terms of assembly, tetramer of two alpha and two beta subunits. The cofactor is Mg(2+).

Its subcellular location is the cytoplasm. It catalyses the reaction tRNA(Phe) + L-phenylalanine + ATP = L-phenylalanyl-tRNA(Phe) + AMP + diphosphate + H(+). This is Phenylalanine--tRNA ligase alpha subunit from Pyrococcus furiosus (strain ATCC 43587 / DSM 3638 / JCM 8422 / Vc1).